The primary structure comprises 196 residues: Probable malonic semialdehyde reductase RutE (196 aa).

This sequence belongs to the nitroreductase family. HadB/RutE subfamily. FMN is required as a cofactor.

The enzyme catalyses 3-hydroxypropanoate + NADP(+) = 3-oxopropanoate + NADPH + H(+). Its function is as follows. May reduce toxic product malonic semialdehyde to 3-hydroxypropionic acid, which is excreted. The polypeptide is Probable malonic semialdehyde reductase RutE (Escherichia coli O139:H28 (strain E24377A / ETEC)).